The sequence spans 2530 residues: Cullin-9 (2530 aa).

Lys87 participates in a covalent cross-link: Glycyl lysine isopeptide (Lys-Gly) (interchain with G-Cter in ubiquitin). A CPH domain is found at 367-440; that stretch reads RSEFSSRSGY…HWHMLEILGP (74 aa). Disordered stretches follow at residues 585 to 639 and 930 to 951; these read LPSS…KAQS and RGSPERAVLETPSTQGQDGSPE. A compositionally biased stretch (polar residues) spans 940-949; the sequence is TPSTQGQDGS. The residue at position 978 (Ser978) is a Phosphoserine. A DOC domain is found at 1145 to 1324; sequence PITIPFFDVF…RTCLFYTIRA (180 aa). 1365–1372 is an ATP binding site; that stretch reads AAQALGKT. Disordered stretches follow at residues 1435-1468 and 1667-1690; these read EAPPGPSPEPSSQPLSKNSKGQDGSPTPAPTPVC and GDQEEWRPEKVEEDDEGQETGREL. At Ser1459 the chain carries Phosphoserine. Residue Lys1884 forms a Glycyl lysine isopeptide (Lys-Gly) (interchain with G-Cter in NEDD8) linkage. The tract at residues 2070-2287 is TRIAD supradomain; it reads RPDQCPVCVT…KDYYNCSAMV (218 aa). 18 residues coordinate Zn(2+): Cys2074, Cys2077, Cys2092, His2094, Cys2097, Cys2100, Cys2119, Cys2124, Cys2164, Cys2170, Cys2185, Cys2188, Cys2193, Cys2196, His2202, Cys2207, Cys2240, and Cys2243. Residues 2074 to 2124 form an RING-type 1 zinc finger; the sequence is CPVCVTPLGPHDDSPSLCCLHCCCKSCWNEYLTTRIEQNFVLNCTCPIADC. The IBR-type zinc-finger motif lies at 2144-2207; sequence SKYEKALLRG…FPEAHYPASC (64 aa). The segment at 2240–2269 adopts an RING-type 2; atypical zinc-finger fold; sequence CPSCQAPIEKNEGCLHMTCARCNHGFCWRC. Residue Cys2253 is part of the active site. Positions 2258, 2261, 2266, 2269, 2277, and 2283 each coordinate Zn(2+). Ser2440 is subject to Phosphoserine. The segment at 2443–2530 is disordered; that stretch reads VETREVKGSN…DEDEDDESYD (88 aa). The segment covering 2452–2462 has biased composition (polar residues); the sequence is NVPSDQPQGSS. Residues 2459–2500 adopt a coiled-coil conformation; that stretch reads QGSSGLEVEDEEEEEEEEEEEEEEEEEDVPEWQHEFDEELDN. 2 stretches are compositionally biased toward acidic residues: residues 2465-2510 and 2520-2530; these read EVED…EESE and GDEDEDDESYD.

Belongs to the cullin family. As to quaternary structure, component of a Cul9-RING complex consisting of CUL9 and RBX1; the CUL9-RBX1 complex is a heterododecamer composed of six CUL9 and six RBX1 protomers. Interacts (via C-terminal TRIAD/RBR supradomain) with E2 ubiquitin-conjugating enzyme UBE2L3. Interacts with CUL7; the interaction with the CUL7 component of the 3M complex leads to inhibition of CUL9 activity. The CUL7-CUL9 heterodimer seems to interact specifically with TP53, likely via the CPH domain. Forms a complex with p53/TP53 in the cytoplasm of unstressed cells. Interacts with UBCH7 and UBCH8. Post-translationally, autoubiquitinated by the CUL9-RBX1 complex at Lys-87. Neddylated. Neddylation is mediated by E1 enzyme UBA3-NAE1 complex and E2 enzyme UBE2F. Structural rearrangment of the C-terminal TRIAD/RBR supradomain may play a role in neddylation and deneddylation.

The protein resides in the cytoplasm. Functionally, core component of the Cul9-RING ubiquitin-protein ligase complex composed of CUL9 and RBX1. The CUL9-RBX1 complex mediates ubiquitination and subsequent degradation of BIRC5 and is required to maintain microtubule dynamics and genome integrity. Acts downstream of the 3M complex, which inhibits CUL9 activity and the ubiquitination of BIRC5. The CUL9-RBX1 complex also mediates mono-ubiquitination of p53/TP53. Acts as a cytoplasmic anchor protein in p53/TP53-associated protein complex. Regulates the subcellular localization of p53/TP53 and its subsequent function. Ubiquitinates apurinic/apyrimidinic endodeoxyribonuclease APEX2. Ubiquitination by the CUL9-RBX1 complex is predominantly mediated by E2 ubiquitin-conjugating enzymes UBE2L3 and UBE2D2. The chain is Cullin-9 (Cul9) from Mus musculus (Mouse).